The following is a 737-amino-acid chain: Glycogen [starch] synthase, muscle (737 aa).

The residue at position 8 (Ser-8) is a Phosphoserine; by AMPK and PKA. Ser-11 carries the phosphoserine modification. Position 39 (Lys-39) interacts with UDP. UDP-alpha-D-glucose is bound by residues His-205 and Arg-211. Alpha-D-glucose 6-phosphate is bound by residues His-291, Glu-292, Gln-294, His-297, and Lys-301. Arg-331 is a binding site for UDP. Arg-331 serves as a coordination point for UDP-alpha-D-glucose. Ser-412 bears the Phosphoserine mark. His-501 serves as a coordination point for alpha-D-glucose 6-phosphate. 3 residues coordinate UDP-alpha-D-glucose: Glu-510, Trp-512, and Gly-513. Thr-515 is a binding site for UDP. 2 residues coordinate alpha-D-glucose 6-phosphate: Arg-582 and Arg-586. Residues 634 to 737 (YRYPRPASVP…PTSSLGEERN (104 aa)) are disordered. Ser-641, Ser-645, Ser-649, and Ser-652 each carry phosphoserine. At Ser-653 the chain carries Phosphoserine; by GSK3-alpha and GSK3-beta. Ser-657 carries the phosphoserine; by CK2 modification. The span at 658 to 681 (EDEEDPRNGPLEEDGERYDEDEEA) shows a compositional bias: acidic residues. The span at 682-695 (AKDRRNIRAPEWPR) shows a compositional bias: basic and acidic residues. Ser-698 is subject to Phosphoserine. Over residues 698–714 (SCTSSTSGSKRNSVDTA) the composition is skewed to polar residues. Thr-700 carries the post-translational modification Phosphothreonine. The residue at position 710 (Ser-710) is a Phosphoserine. A compositionally biased stretch (low complexity) spans 715-737 (TSSSLSTPSEPLSPTSSLGEERN). At Thr-721 the chain carries Phosphothreonine. A phosphoserine mark is found at Ser-727 and Ser-731.

The protein belongs to the glycosyltransferase 3 family. As to quaternary structure, part of the GYS1-GYG1 complex, a heterooctamer composed of a tetramer of GYS1 and 2 dimers of GYG1, where each GYS1 protomer binds to one GYG1 subunit (via GYG1 C-terminus); the GYS1 tetramer may dissociate from GYG1 dimers to continue glycogen polymerization on its own. In terms of processing, phosphorylation at Ser-8 by AMPK inactivates the enzyme activity. Primed phosphorylation at Ser-657 (site 5) by CSNK2A1 and CSNK2A2 is required for inhibitory phosphorylation at Ser-641 (site 3a), Ser-645 (site 3b), Ser-649 (site 3c) and Ser-653 (site 4) by GSK3A an GSK3B. Phosphorylated at Ser-641 by DYRK2, leading to inactivation. Phosphorylated at Ser-641 by PASK, leading to inactivation; phosphorylation by PASK is inhibited by glycogen. Dephosphorylation at Ser-641 and Ser-645 by PP1 activates the enzyme. Expressed in skeletal muscle and most other cell types where glycogen is present.

The catalysed reaction is [(1-&gt;4)-alpha-D-glucosyl](n) + UDP-alpha-D-glucose = [(1-&gt;4)-alpha-D-glucosyl](n+1) + UDP + H(+). It functions in the pathway glycan biosynthesis; glycogen biosynthesis. With respect to regulation, allosteric activation by glucose-6-phosphate. Phosphorylation reduces enzyme activity by constraining a tense conformation of the tetramer through inter-subunit interaction. Phosphorylation reduces the activity towards UDP-glucose. When in the non-phosphorylated state, glycogen synthase does not require glucose-6-phosphate as an allosteric activator; when phosphorylated it does. Glycogen synthase participates in the glycogen biosynthetic process along with glycogenin and glycogen branching enzyme. Extends the primer composed of a few glucose units formed by glycogenin by adding new glucose units to it. In this context, glycogen synthase transfers the glycosyl residue from UDP-Glc to the non-reducing end of alpha-1,4-glucan. The chain is Glycogen [starch] synthase, muscle from Homo sapiens (Human).